A 103-amino-acid chain; its full sequence is CLAVATA3/ESR (CLE)-related protein 22 (103 aa).

The first 34 residues, 1–34 (MGNYYSRRKSRKHITTVALIILLLLLFLFLYAKA), serve as a signal peptide directing secretion. A disordered region spans residues 37–103 (SSPNIHHHST…FTGPNPLHNR (67 aa)). Basic residues predominate over residues 41–50 (IHHHSTHGSL). Polar residues predominate over residues 66–76 (NAASSRGSKYT). The residue at position 97 (Pro-97) is a Hydroxyproline. A glycan (O-linked (Ara...) hydroxyproline) is linked at Pro-97.

The protein belongs to the CLV3/ESR signal peptide family. In terms of processing, the O-glycosylation (arabinosylation) of the hydroxyproline Pro-97 enhances binding affinity of the CLE22p peptide for its receptor. In terms of tissue distribution, mostly expressed in stems and apex, and, to a lower extent, in seedlings, leaves, flowers and siliques.

It is found in the secreted. Its subcellular location is the extracellular space. Functionally, extracellular signal peptide that regulates cell fate. Represses root apical meristem maintenance. The sequence is that of CLAVATA3/ESR (CLE)-related protein 22 from Arabidopsis thaliana (Mouse-ear cress).